The sequence spans 926 residues: Protein O-mannosyl-transferase Tmtc3 (926 aa).

The segment at 1 to 26 is disordered; that stretch reads MSTNPNPGIHQYAPSTLPREREREGA. Residues 1-36 are Cytoplasmic-facing; the sequence is MSTNPNPGIHQYAPSTLPREREREGATNSPQRNLLE. The helical transmembrane segment at 37–57 threads the bilayer; it reads FLCICVACIVCYYNSTQCGLV. At 58-114 the chain is on the extracellular side; that stretch reads FDDISAIRDNKDLRPHTPLINVFLNDFWGTPMRKEQSHKSYRPLTVLTFRFNYLLHA. Residues 115–135 traverse the membrane as a helical segment; that stretch reads LEPFGYHLVNLLLHLSVCLLW. Residues 136–169 are Cytoplasmic-facing; the sequence is RRVCRLLLRQCAASGSNAISAPSSSSVSQLNTCA. Residues 170–190 traverse the membrane as a helical segment; it reads FVASLLFAVHPVHTEAVTGVV. At 191–192 the chain is on the extracellular side; that stretch reads GR. A helical transmembrane segment spans residues 193–213; sequence AELLSSICFLAAFLSYAKSVG. Over 214–222 the chain is Cytoplasmic; sequence DSGCPRRTN. 2 helical membrane passes run 223 to 239 and 240 to 259; these read WLTL…ASML and CKEQ…LFVV. Residues 260–303 are Cytoplasmic-facing; the sequence is HQLRPLHLCHFVLRLFDERTEQQSPKLANPSGIRRWSSSTLWKR. A helical transmembrane segment spans residues 304–324; that stretch reads LSFLVGITLTLLVGRVYVMGS. Topologically, residues 325-345 are extracellular; it reads QLPIFTRFDNPASAADTPERQ. A helical transmembrane segment spans residues 346-366; it reads LTYGYLIYLNCWLLLCPSLLC. Over 367 to 384 the chain is Cytoplasmic; the sequence is CDWTMGTVPLLQGFTDSR. The helical transmembrane segment at 385–405 threads the bilayer; the sequence is NITTLLTFLALGAMVAKTCFT. Over 406-419 the chain is Extracellular; sequence RNLALSRTLIMCLG. Residues 420–440 traverse the membrane as a helical segment; sequence WMVLPFLPASNLFFPVGFVVA. Over 441–442 the chain is Cytoplasmic; the sequence is ER. A helical membrane pass occupies residues 443–463; the sequence is ILYMPSMGYCLLVAYGFEQLQ. The Extracellular portion of the chain corresponds to 464–926; the sequence is RRGSLSWQRF…RPTHKSRKRS (463 aa). TPR repeat units follow at residues 514–547, 548–581, 596–630, 631–664, 665–698, 736–769, 770–803, 805–838, and 839–872; these read AKLY…QTDD, IGAH…FPQA, LNVF…RSDY, VQAY…DNEN, ADIY…YPEH, EKVY…KADF, RSAL…HPSH, KGLI…DPHN, and TQGL…APAE. N-linked (GlcNAc...) asparagine glycans are attached at residues N609 and N645.

This sequence belongs to the TMTC family.

It is found in the membrane. The protein localises to the endoplasmic reticulum. It carries out the reaction a di-trans,poly-cis-dolichyl beta-D-mannosyl phosphate + L-seryl-[protein] = 3-O-(alpha-D-mannosyl)-L-seryl-[protein] + a di-trans,poly-cis-dolichyl phosphate + H(+). It catalyses the reaction a di-trans,poly-cis-dolichyl beta-D-mannosyl phosphate + L-threonyl-[protein] = 3-O-(alpha-D-mannosyl)-L-threonyl-[protein] + a di-trans,poly-cis-dolichyl phosphate + H(+). The protein operates within protein modification; protein glycosylation. Transfers mannosyl residues to the hydroxyl group of serine or threonine residues. In Drosophila melanogaster (Fruit fly), this protein is Protein O-mannosyl-transferase Tmtc3.